The chain runs to 708 residues: DNA ligase 2 (708 aa).

NAD(+) is bound by residues 71-75, 121-122, and E153; these read DADYD and SL. The active-site N6-AMP-lysine intermediate is K155. The NAD(+) site is built by R176, E213, K330, and K354. Zn(2+) is bound by residues C448, C451, C466, and C471. In terms of domain architecture, BRCT spans 627–708; it reads ADAGTLAGKE…LLRLAEAAPE (82 aa).

Belongs to the NAD-dependent DNA ligase family. LigA subfamily. Mg(2+) is required as a cofactor. The cofactor is Mn(2+).

The enzyme catalyses NAD(+) + (deoxyribonucleotide)n-3'-hydroxyl + 5'-phospho-(deoxyribonucleotide)m = (deoxyribonucleotide)n+m + AMP + beta-nicotinamide D-nucleotide.. DNA ligase that catalyzes the formation of phosphodiester linkages between 5'-phosphoryl and 3'-hydroxyl groups in double-stranded DNA using NAD as a coenzyme and as the energy source for the reaction. It is essential for DNA replication and repair of damaged DNA. This Opitutus terrae (strain DSM 11246 / JCM 15787 / PB90-1) protein is DNA ligase 2.